A 47-amino-acid chain; its full sequence is Large ribosomal subunit protein eL40 (47 aa).

This sequence belongs to the eukaryotic ribosomal protein eL40 family.

The chain is Large ribosomal subunit protein eL40 from Methanococcus vannielii (strain ATCC 35089 / DSM 1224 / JCM 13029 / OCM 148 / SB).